We begin with the raw amino-acid sequence, 344 residues long: Phosphoribosylformylglycinamidine cyclo-ligase (344 aa).

The protein belongs to the AIR synthase family.

It localises to the cytoplasm. The catalysed reaction is 2-formamido-N(1)-(5-O-phospho-beta-D-ribosyl)acetamidine + ATP = 5-amino-1-(5-phospho-beta-D-ribosyl)imidazole + ADP + phosphate + H(+). Its pathway is purine metabolism; IMP biosynthesis via de novo pathway; 5-amino-1-(5-phospho-D-ribosyl)imidazole from N(2)-formyl-N(1)-(5-phospho-D-ribosyl)glycinamide: step 2/2. This is Phosphoribosylformylglycinamidine cyclo-ligase from Haemophilus influenzae (strain PittGG).